The chain runs to 356 residues: Putative methylthioribose-1-phosphate isomerase (356 aa).

Residues 57–59, Arg100, and Gln206 each bind substrate; that span reads RGA. Asp247 serves as the catalytic Proton donor. A substrate-binding site is contributed by 257–258; sequence NK.

This sequence belongs to the eIF-2B alpha/beta/delta subunits family. MtnA subfamily.

It carries out the reaction 5-(methylsulfanyl)-alpha-D-ribose 1-phosphate = 5-(methylsulfanyl)-D-ribulose 1-phosphate. Functionally, catalyzes the interconversion of methylthioribose-1-phosphate (MTR-1-P) into methylthioribulose-1-phosphate (MTRu-1-P). The sequence is that of Putative methylthioribose-1-phosphate isomerase from Pyrococcus furiosus (strain ATCC 43587 / DSM 3638 / JCM 8422 / Vc1).